Here is a 755-residue protein sequence, read N- to C-terminus: Primary amine oxidase (755 aa).

Residues 1–30 (MANGLKFSPRKTALALAVAVVCAWQSPVFA) form the signal peptide. Residues 411 to 422 (YLDSGDYGMGTL) and 493 to 498 (VGNYDY) contribute to the substrate site. Residue Asp413 is the Proton acceptor of the active site. The active-site Schiff-base intermediate with substrate; via topaquinone is Tyr496. 2',4',5'-topaquinone is present on Tyr496. Cu cation is bound by residues His554 and His556. The Ca(2+) site is built by Asp563, Leu564, Asp565, Glu603, Tyr697, Asp700, Glu702, and Asp708. Mn(2+) is bound at residue Asp563. Residue Asp565 participates in Mn(2+) binding. Asp708 serves as a coordination point for Mn(2+). His719 contributes to the Cu cation binding site.

It belongs to the copper/topaquinone oxidase family. Homodimer. Cu cation serves as cofactor. Requires Zn(2+) as cofactor. It depends on Ca(2+) as a cofactor. L-topaquinone is required as a cofactor. The cofactor is Mn(2+). Post-translationally, topaquinone (TPQ) is generated by copper-dependent autoxidation of a specific tyrosyl residue.

The protein localises to the periplasm. The catalysed reaction is a primary methyl amine + O2 + H2O = an aldehyde + H2O2 + NH4(+). Functionally, active on tyramine, tryptamine, beta-phenethylamine and dopamine. This Klebsiella aerogenes (Enterobacter aerogenes) protein is Primary amine oxidase (maoA).